The sequence spans 204 residues: Large ribosomal subunit protein uL4 (204 aa).

A disordered region spans residues 44 to 76 (KRQGTQSAKTRSEVRGGGIKPWRQKGTGRARQG).

Belongs to the universal ribosomal protein uL4 family. Part of the 50S ribosomal subunit.

In terms of biological role, one of the primary rRNA binding proteins, this protein initially binds near the 5'-end of the 23S rRNA. It is important during the early stages of 50S assembly. It makes multiple contacts with different domains of the 23S rRNA in the assembled 50S subunit and ribosome. Functionally, forms part of the polypeptide exit tunnel. This chain is Large ribosomal subunit protein uL4, found in Clostridium perfringens (strain 13 / Type A).